The following is a 245-amino-acid chain: Probable phosphatase YcdX (245 aa).

Residues His7, His9, His15, His40, Glu73, His101, His131, Asp192, and His194 each coordinate Zn(2+).

This sequence belongs to the PHP family. In terms of assembly, homotrimer. It depends on Zn(2+) as a cofactor.

The polypeptide is Probable phosphatase YcdX (Escherichia coli O139:H28 (strain E24377A / ETEC)).